A 247-amino-acid chain; its full sequence is 5-oxoprolinase subunit A (247 aa).

It belongs to the LamB/PxpA family. As to quaternary structure, forms a complex composed of PxpA, PxpB and PxpC.

It carries out the reaction 5-oxo-L-proline + ATP + 2 H2O = L-glutamate + ADP + phosphate + H(+). Its function is as follows. Catalyzes the cleavage of 5-oxoproline to form L-glutamate coupled to the hydrolysis of ATP to ADP and inorganic phosphate. This Ralstonia pickettii (strain 12J) protein is 5-oxoprolinase subunit A.